Here is a 554-residue protein sequence, read N- to C-terminus: Glutamine--tRNA ligase (554 aa).

The 'HIGH' region motif lies at 34–44; the sequence is PEPNGYLHIGH. Residues 35–37 and 41–47 contribute to the ATP site; these read EPN and HIGHAKS. The L-glutamine site is built by D67 and Y212. Residues T231, 261–262, and 269–271 each bind ATP; these read RL and MSK. A 'KMSKS' region motif is present at residues 268–272; sequence VMSKR. The segment at 317 to 324 is interaction with tRNA; it reads TKQDNTIE.

The protein belongs to the class-I aminoacyl-tRNA synthetase family. As to quaternary structure, monomer.

Its subcellular location is the cytoplasm. The enzyme catalyses tRNA(Gln) + L-glutamine + ATP = L-glutaminyl-tRNA(Gln) + AMP + diphosphate. The sequence is that of Glutamine--tRNA ligase from Escherichia coli O157:H7.